We begin with the raw amino-acid sequence, 340 residues long: L-threonine 3-dehydrogenase (340 aa).

Cys38 contacts Zn(2+). Active-site charge relay system residues include Thr40 and His43. The Zn(2+) site is built by His63, Glu64, Cys93, Cys96, Cys99, and Cys107. Residues Ile175, Asp195, Arg200, Leu261 to Ile263, and Ile285 to Tyr286 each bind NAD(+).

This sequence belongs to the zinc-containing alcohol dehydrogenase family. In terms of assembly, homotetramer. Zn(2+) serves as cofactor.

The protein resides in the cytoplasm. It catalyses the reaction L-threonine + NAD(+) = (2S)-2-amino-3-oxobutanoate + NADH + H(+). The protein operates within amino-acid degradation; L-threonine degradation via oxydo-reductase pathway; glycine from L-threonine: step 1/2. Its function is as follows. Catalyzes the NAD(+)-dependent oxidation of L-threonine to 2-amino-3-ketobutyrate. In Xanthomonas campestris pv. campestris (strain ATCC 33913 / DSM 3586 / NCPPB 528 / LMG 568 / P 25), this protein is L-threonine 3-dehydrogenase.